The primary structure comprises 179 residues: Shikimate kinase (179 aa).

14–19 (GAGKTT) is a binding site for ATP. Position 18 (Thr18) interacts with Mg(2+). Substrate-binding residues include Asp36, Arg60, and Gly82. Arg120 is a binding site for ATP. Arg139 lines the substrate pocket.

The protein belongs to the shikimate kinase family. In terms of assembly, monomer. Mg(2+) serves as cofactor.

The protein resides in the cytoplasm. It catalyses the reaction shikimate + ATP = 3-phosphoshikimate + ADP + H(+). The protein operates within metabolic intermediate biosynthesis; chorismate biosynthesis; chorismate from D-erythrose 4-phosphate and phosphoenolpyruvate: step 5/7. Its function is as follows. Catalyzes the specific phosphorylation of the 3-hydroxyl group of shikimic acid using ATP as a cosubstrate. The sequence is that of Shikimate kinase from Methylococcus capsulatus (strain ATCC 33009 / NCIMB 11132 / Bath).